Consider the following 603-residue polypeptide: Cell division control protein 48 homolog B (603 aa).

ATP contacts are provided by residues 63 to 70 (GPPGTGKT) and 327 to 334 (GPPGCSKT).

The protein belongs to the AAA ATPase family.

It localises to the nucleus. The protein resides in the cytoplasm. The protein localises to the cytoskeleton. It is found in the phragmoplast. Probably functions in cell division and growth processes. Interacts with certain SNAREs as part of specialized membrane fusion events where vesicles from the same organelle fuse (homotypic fusion). The polypeptide is Cell division control protein 48 homolog B (CDC48B) (Arabidopsis thaliana (Mouse-ear cress)).